The primary structure comprises 387 residues: 1-deoxy-D-xylulose 5-phosphate reductoisomerase (387 aa).

The NADPH site is built by Thr-10, Gly-11, Ser-12, Val-13, Asn-38, and Asn-119. Position 120 (Lys-120) interacts with 1-deoxy-D-xylulose 5-phosphate. Glu-121 provides a ligand contact to NADPH. Position 145 (Asp-145) interacts with Mn(2+). Positions 146, 147, 170, and 193 each coordinate 1-deoxy-D-xylulose 5-phosphate. Glu-147 contributes to the Mn(2+) binding site. Residue Gly-199 coordinates NADPH. Residues Ser-206, Asn-211, Lys-212, and Glu-215 each contribute to the 1-deoxy-D-xylulose 5-phosphate site. Glu-215 is a binding site for Mn(2+).

Belongs to the DXR family. Mg(2+) serves as cofactor. The cofactor is Mn(2+).

It carries out the reaction 2-C-methyl-D-erythritol 4-phosphate + NADP(+) = 1-deoxy-D-xylulose 5-phosphate + NADPH + H(+). Its pathway is isoprenoid biosynthesis; isopentenyl diphosphate biosynthesis via DXP pathway; isopentenyl diphosphate from 1-deoxy-D-xylulose 5-phosphate: step 1/6. Its function is as follows. Catalyzes the NADPH-dependent rearrangement and reduction of 1-deoxy-D-xylulose-5-phosphate (DXP) to 2-C-methyl-D-erythritol 4-phosphate (MEP). The sequence is that of 1-deoxy-D-xylulose 5-phosphate reductoisomerase from Wolbachia sp. subsp. Drosophila simulans (strain wRi).